The chain runs to 121 residues: Protein FAM241B (121 aa).

The segment at 12-58 (QDDDPRVRTTTQPPRGSIPRQSFFNRGHGAPPGGPGPRQQQAGARLG) is disordered. The span at 19 to 35 (RTTTQPPRGSIPRQSFF) shows a compositional bias: polar residues. Serine 33 is modified (phosphoserine). Residues 48-58 (PRQQQAGARLG) show a composition bias toward low complexity. Phosphoserine is present on serine 62. The chain crosses the membrane as a helical span at residues 92 to 112 (ILLLFLLMMLGVRGLLLVGLV).

The protein belongs to the FAM241 family.

It localises to the membrane. In terms of biological role, may play a role in lysosome homeostasis. The polypeptide is Protein FAM241B (Homo sapiens (Human)).